A 594-amino-acid polypeptide reads, in one-letter code: Protein CBFA2T2 (594 aa).

The residue at position 24 (Ser-24) is a Phosphoserine. A Glycyl lysine isopeptide (Lys-Gly) (interchain with G-Cter in SUMO2) cross-link involves residue Lys-29. The tract at residues 48 to 96 (GGPRPVSFTPTALSNGINHSPPTLNGAPSPPQRFSNGPASSTSSALTNQ) is disordered. Polar residues-rich tracts occupy residues 55–70 (FTPT…SPPT) and 79–96 (QRFS…LTNQ). Residues 98–206 (LPATCGARQL…QHEHLLLNTS (109 aa)) are interaction with PRDM14. Positions 104–199 (ARQLSKLKRF…TPSQYLAQHE (96 aa)) constitute a TAFH domain. Residues 220–257 (VHGNGKRPSPERRDENNFERDTVPPEPPAKRVCTISPA) are disordered. Positions 227–242 (PSPERRDENNFERDTV) are enriched in basic and acidic residues. Residue Ser-255 is modified to Phosphoserine. The interval 322–368 (QDELVDHRLTEREWADEWKHLDHALNCIMEMVEKTRRSMAVLRRCQE) is nervy homology region 2 (NHR2). The segment at 388-416 (RKTGTELVSRQHSPGSTDSLSNDSQREFT) is disordered. Positions 393-410 (ELVSRQHSPGSTDSLSND) are enriched in polar residues. Position 400 is a phosphoserine (Ser-400). A nervy homology region 3 (NHR3) region spans residues 426–475 (VEFWKKTEEAVNKVKIQAMSEVQKAVAEAEQKAFEVIATERARMEQTIAD). Lys-440 participates in a covalent cross-link: Glycyl lysine isopeptide (Lys-Gly) (interchain with G-Cter in SUMO2). Residues 442–482 (QAMSEVQKAVAEAEQKAFEVIATERARMEQTIADVKRQAAE) adopt a coiled-coil conformation. Zn(2+) is bound by residues Cys-498, Cys-501, Cys-509, Cys-512, Cys-518, Cys-522, His-530, and Cys-534. The MYND-type zinc-finger motif lies at 498 to 534 (CWNCGRKASETCSGCNIARYCGSFCQHKDWERHHRLC). Residues 538 to 594 (LHGHSPHSQSRPLLPGGRGSARSADCSVPSPALDKTSATTSRSSTPASVTAIDANGL) are disordered. Ser-567 bears the Phosphoserine mark. Over residues 573-588 (TSATTSRSSTPASVTA) the composition is skewed to low complexity.

This sequence belongs to the CBFA2T family. In terms of assembly, homooligomer. Homotetramerization is mediated by the NHR2 domain. Interacts with CBFA2T3/MTG16. Can interact with RUNX1T1/CBFA2T1. Heterotetramerization between members of the CBFA2T family is proposed. Interacts with RBP, GFI1, TCF4, PRDM14. Interacts with TAL1 and CBFA2T3/MTG16; the heteromer with CBFA2T3/MTG16 may function in repression of TAL1. As to expression, expressed in embryonic stem cells.

Its subcellular location is the nucleus. In terms of biological role, transcriptional corepressor which facilitates transcriptional repression via its association with DNA-binding transcription factors and recruitment of other corepressors and histone-modifying enzymes. Via association with PRDM14 is involved in regulation of embryonic stem cell (ESC) pluripotency. Involved in primordial germ cell (PCG) formation. Stabilizes PRDM14 and OCT4 on chromatin in a homooligomerization-dependent mannerCan repress the expression of MMP7 in a ZBTB33-dependent manner. Through heteromerization with CBFA2T3/MTG16 may be involved in regulation of the proliferation and the differentiation of erythroid progenitors by repressing the expression of TAL1 target genes. Required for the maintenance of the secretory cell lineage in the small intestine. Can inhibit Notch signaling probably by association with RBPJ and may be involved in GFI1-mediated Paneth cell differentiation. The chain is Protein CBFA2T2 (Cbfa2t2) from Mus musculus (Mouse).